A 100-amino-acid polypeptide reads, in one-letter code: Urease subunit gamma (100 aa).

This sequence belongs to the urease gamma subunit family. In terms of assembly, heterotrimer of UreA (gamma), UreB (beta) and UreC (alpha) subunits. Three heterotrimers associate to form the active enzyme.

It localises to the cytoplasm. It catalyses the reaction urea + 2 H2O + H(+) = hydrogencarbonate + 2 NH4(+). It participates in nitrogen metabolism; urea degradation; CO(2) and NH(3) from urea (urease route): step 1/1. The sequence is that of Urease subunit gamma from Bordetella pertussis (strain Tohama I / ATCC BAA-589 / NCTC 13251).